We begin with the raw amino-acid sequence, 272 residues long: 2-succinyl-6-hydroxy-2,4-cyclohexadiene-1-carboxylate synthase (272 aa).

The protein belongs to the AB hydrolase superfamily. MenH family. As to quaternary structure, monomer.

The enzyme catalyses 5-enolpyruvoyl-6-hydroxy-2-succinyl-cyclohex-3-ene-1-carboxylate = (1R,6R)-6-hydroxy-2-succinyl-cyclohexa-2,4-diene-1-carboxylate + pyruvate. The protein operates within quinol/quinone metabolism; 1,4-dihydroxy-2-naphthoate biosynthesis; 1,4-dihydroxy-2-naphthoate from chorismate: step 3/7. It functions in the pathway quinol/quinone metabolism; menaquinone biosynthesis. Functionally, catalyzes a proton abstraction reaction that results in 2,5-elimination of pyruvate from 2-succinyl-5-enolpyruvyl-6-hydroxy-3-cyclohexene-1-carboxylate (SEPHCHC) and the formation of 2-succinyl-6-hydroxy-2,4-cyclohexadiene-1-carboxylate (SHCHC). In Yersinia pseudotuberculosis serotype IB (strain PB1/+), this protein is 2-succinyl-6-hydroxy-2,4-cyclohexadiene-1-carboxylate synthase.